Consider the following 277-residue polypeptide: Diaminopimelate epimerase (277 aa).

The substrate site is built by N13, Q46, and N66. Residue C75 is the Proton donor of the active site. Residues 76–77 (GN), N159, N192, and 210–211 (ER) each bind substrate. The active-site Proton acceptor is C219. 220-221 (GT) contributes to the substrate binding site.

Belongs to the diaminopimelate epimerase family. In terms of assembly, homodimer.

It localises to the cytoplasm. The enzyme catalyses (2S,6S)-2,6-diaminopimelate = meso-2,6-diaminopimelate. It participates in amino-acid biosynthesis; L-lysine biosynthesis via DAP pathway; DL-2,6-diaminopimelate from LL-2,6-diaminopimelate: step 1/1. Functionally, catalyzes the stereoinversion of LL-2,6-diaminopimelate (L,L-DAP) to meso-diaminopimelate (meso-DAP), a precursor of L-lysine and an essential component of the bacterial peptidoglycan. The sequence is that of Diaminopimelate epimerase from Aromatoleum aromaticum (strain DSM 19018 / LMG 30748 / EbN1) (Azoarcus sp. (strain EbN1)).